Here is a 116-residue protein sequence, read N- to C-terminus: Large ribosomal subunit protein bL19 (116 aa).

This sequence belongs to the bacterial ribosomal protein bL19 family.

Its function is as follows. This protein is located at the 30S-50S ribosomal subunit interface and may play a role in the structure and function of the aminoacyl-tRNA binding site. This Staphylococcus saprophyticus subsp. saprophyticus (strain ATCC 15305 / DSM 20229 / NCIMB 8711 / NCTC 7292 / S-41) protein is Large ribosomal subunit protein bL19.